We begin with the raw amino-acid sequence, 147 residues long: Small ribosomal subunit protein uS12 (147 aa).

It belongs to the universal ribosomal protein uS12 family. In terms of assembly, part of the 30S ribosomal subunit.

In terms of biological role, with S4 and S5 plays an important role in translational accuracy. Located at the interface of the 30S and 50S subunits. In Pyrobaculum arsenaticum (strain DSM 13514 / JCM 11321 / PZ6), this protein is Small ribosomal subunit protein uS12.